The chain runs to 313 residues: UbiA prenyltransferase claS (313 aa).

Transmembrane regions (helical) follow at residues 30-52 (FAGTMVLFWPFAWGLTMAARALL) and 57-79 (TFGTILACGFFASCLLHSAGCIW). Positions 81–88 (DILDQDFD) match the NDxxDxxxD motif. Mg(2+)-binding residues include Asp-84 and Asp-88. 3 consecutive transmembrane segments (helical) span residues 99 to 121 (IASGAISNTGALIFMFAHLFILM), 131 to 148 (AWMIGIISIFPLPGIYPL), and 155 to 177 (WPQAWLGIALNTGIVMAWAYTTG). 2 residues coordinate Mg(2+): Asp-205 and Asp-209. The short motif at 205–209 (DKKDD) is the DxxxD element. The YxxxK motif lies at 205–209 (DKKDD). The next 3 membrane-spanning stretches (helical) occupy residues 227 to 247 (PVLSLFGSIIVGSLLISGILN), 250 to 270 (ELPYFLVSVGGGGLHLATQLW), and 293 to 313 (AIVWAGLLLDYAWAVGVGAIM).

Belongs to the UbiA prenyltransferase family. Requires Mg(2+) as cofactor.

The protein resides in the membrane. It catalyses the reaction hydroquinone + (2E)-geranyl diphosphate = (2E)-geranylhydroquinone + diphosphate. It functions in the pathway secondary metabolite biosynthesis; terpenoid biosynthesis. Prenyltransferase; part of the gene cluster that mediates the biosynthesis of clavilactone A, a meroterpenoid that features a unique benzo-fused ten-membered carbocyclic ring unit with an alpha,beta-epoxy-gamma-lactone moiety, forming an intriguing 10/5/3 tricyclic nested skeleton. ClaR, ClaS and ClaT are sufficient to produce clavilactone A. Within the pathway, claS acts as an atypical UbiA prenyltransferase that transfers geranyl pyrophosphate (GPP) to hydroquinone (HYQ) instead of p-hydroxybenzoic acid (PHB), producing the first intermediate geranylhydroquinone. The cytochrome P450 monooxygenase claR then catalyzes the diradical coupling reaction between the intramolecular hydroquinone and allyl moieties to form the benzo-fused ten-membered carbocyclic ring unit of wigantol. Finally the cytochrome P450 monooxygenase claT exquisitely and stereoselectively assembles the alpha,beta-epoxy-gamma-lactone moiety, producing clavilactone A via arnebinol A. The polypeptide is UbiA prenyltransferase claS (Ampulloclitocybe clavipes (Club foot)).